A 449-amino-acid polypeptide reads, in one-letter code: Phosphoglucosamine mutase (449 aa).

Catalysis depends on serine 100, which acts as the Phosphoserine intermediate. Residues serine 100, aspartate 241, aspartate 243, and aspartate 245 each coordinate Mg(2+). Residue serine 100 is modified to Phosphoserine.

This sequence belongs to the phosphohexose mutase family. The cofactor is Mg(2+). Post-translationally, activated by phosphorylation.

The enzyme catalyses alpha-D-glucosamine 1-phosphate = D-glucosamine 6-phosphate. In terms of biological role, catalyzes the conversion of glucosamine-6-phosphate to glucosamine-1-phosphate. The protein is Phosphoglucosamine mutase of Clostridium botulinum (strain ATCC 19397 / Type A).